A 777-amino-acid polypeptide reads, in one-letter code: Ribosome-releasing factor 2, mitochondrial (777 aa).

Residues 68–353 (AKIRNIGIMA…AVTMYLPSPE (286 aa)) form the tr-type G domain. GTP contacts are provided by residues 77–84 (AHIDAGKT), 141–145 (DTPGH), and 195–198 (NKMD).

This sequence belongs to the TRAFAC class translation factor GTPase superfamily. Classic translation factor GTPase family. EF-G/EF-2 subfamily.

The protein localises to the mitochondrion. The enzyme catalyses GTP + H2O = GDP + phosphate + H(+). Its function is as follows. Mitochondrial GTPase that mediates the disassembly of ribosomes from messenger RNA at the termination of mitochondrial protein biosynthesis. Acts in collaboration with MRRF. GTP hydrolysis follows the ribosome disassembly and probably occurs on the ribosome large subunit. Not involved in the GTP-dependent ribosomal translocation step during translation elongation. This chain is Ribosome-releasing factor 2, mitochondrial, found in Pongo abelii (Sumatran orangutan).